A 151-amino-acid polypeptide reads, in one-letter code: Phosphopantetheine adenylyltransferase (151 aa).

Substrate is bound at residue Thr-9. ATP contacts are provided by residues 9 to 10 and His-17; that span reads TF. 3 residues coordinate substrate: Lys-41, Thr-73, and Arg-87. Residues 88 to 90, Glu-98, and 122 to 128 each bind ATP; these read GIR and LTCVSST.

It belongs to the bacterial CoaD family. In terms of assembly, homohexamer. It depends on Mg(2+) as a cofactor.

It is found in the cytoplasm. It carries out the reaction (R)-4'-phosphopantetheine + ATP + H(+) = 3'-dephospho-CoA + diphosphate. The protein operates within cofactor biosynthesis; coenzyme A biosynthesis; CoA from (R)-pantothenate: step 4/5. In terms of biological role, reversibly transfers an adenylyl group from ATP to 4'-phosphopantetheine, yielding dephospho-CoA (dPCoA) and pyrophosphate. This is Phosphopantetheine adenylyltransferase from Bacteroides thetaiotaomicron (strain ATCC 29148 / DSM 2079 / JCM 5827 / CCUG 10774 / NCTC 10582 / VPI-5482 / E50).